The sequence spans 360 residues: Diacylglycerol O-acyltransferase 3 (360 aa).

Positions 153–182 (KAKAMKKMTEMDSESSSSSESSDSDCDKGK) are disordered. Residues cysteine 265, cysteine 270, cysteine 298, and cysteine 302 each contribute to the [2Fe-2S] cluster site.

It belongs to the diacylglycerol acyltransferase family. It depends on [2Fe-2S] cluster as a cofactor.

It catalyses the reaction an acyl-CoA + a 1,2-diacyl-sn-glycerol = a triacyl-sn-glycerol + CoA. It functions in the pathway glycerolipid metabolism; triacylglycerol biosynthesis. Its function is as follows. Involved in triacylglycerol (TAG) biosynthesis. Catalyzes the acylation of the sn-3 hydroxy group of sn-1,2-diacylglycerol using acyl-CoA. May preferentially use linolenoyl-CoA as substrate and to a lesser extent linoleoyl-CoA. May contribute to the active recycling of linoleate and linolenate into TAG when seed oil breakdown is blocked. The chain is Diacylglycerol O-acyltransferase 3 from Arabidopsis thaliana (Mouse-ear cress).